A 242-amino-acid chain; its full sequence is Type III pantothenate kinase (242 aa).

5-12 contributes to the ATP binding site; sequence DLGNTRLK. Substrate-binding positions include Tyr94 and 100–103; that span reads GCDR. Catalysis depends on Asp102, which acts as the Proton acceptor. Thr124 contributes to the ATP binding site. Position 175 (Thr175) interacts with substrate.

This sequence belongs to the type III pantothenate kinase family. As to quaternary structure, homodimer. The cofactor is NH4(+). K(+) is required as a cofactor.

It is found in the cytoplasm. It catalyses the reaction (R)-pantothenate + ATP = (R)-4'-phosphopantothenate + ADP + H(+). Its pathway is cofactor biosynthesis; coenzyme A biosynthesis; CoA from (R)-pantothenate: step 1/5. Its function is as follows. Catalyzes the phosphorylation of pantothenate (Pan), the first step in CoA biosynthesis. The protein is Type III pantothenate kinase of Psychrobacter cryohalolentis (strain ATCC BAA-1226 / DSM 17306 / VKM B-2378 / K5).